A 102-amino-acid chain; its full sequence is NADH-quinone oxidoreductase subunit K (102 aa).

Transmembrane regions (helical) follow at residues 6–26 (LIGI…GVLA), 30–50 (MLFQ…GFIA), and 63–83 (MFIL…ALFL).

It belongs to the complex I subunit 4L family. In terms of assembly, NDH-1 is composed of 14 different subunits. Subunits NuoA, H, J, K, L, M, N constitute the membrane sector of the complex.

It is found in the cell inner membrane. It carries out the reaction a quinone + NADH + 5 H(+)(in) = a quinol + NAD(+) + 4 H(+)(out). Functionally, NDH-1 shuttles electrons from NADH, via FMN and iron-sulfur (Fe-S) centers, to quinones in the respiratory chain. The immediate electron acceptor for the enzyme in this species is believed to be ubiquinone. Couples the redox reaction to proton translocation (for every two electrons transferred, four hydrogen ions are translocated across the cytoplasmic membrane), and thus conserves the redox energy in a proton gradient. This is NADH-quinone oxidoreductase subunit K from Rhodopseudomonas palustris (strain TIE-1).